The following is a 239-amino-acid chain: Orotidine 5'-phosphate decarboxylase (239 aa).

Residues D12, K34, 61–70, T125, R188, Q197, G217, and R218 each bind substrate; that span reads DLKFHDIPNT. The Proton donor role is filled by K63.

Belongs to the OMP decarboxylase family. Type 1 subfamily. As to quaternary structure, homodimer.

The enzyme catalyses orotidine 5'-phosphate + H(+) = UMP + CO2. It functions in the pathway pyrimidine metabolism; UMP biosynthesis via de novo pathway; UMP from orotate: step 2/2. In terms of biological role, catalyzes the decarboxylation of orotidine 5'-monophosphate (OMP) to uridine 5'-monophosphate (UMP). In Syntrophomonas wolfei subsp. wolfei (strain DSM 2245B / Goettingen), this protein is Orotidine 5'-phosphate decarboxylase.